Here is a 212-residue protein sequence, read N- to C-terminus: Phosphatidylserine decarboxylase proenzyme (212 aa).

Ser-182 acts as the Schiff-base intermediate with substrate; via pyruvic acid in catalysis. Ser-182 carries the pyruvic acid (Ser); by autocatalysis modification.

It belongs to the phosphatidylserine decarboxylase family. PSD-A subfamily. As to quaternary structure, heterodimer of a large membrane-associated beta subunit and a small pyruvoyl-containing alpha subunit. Pyruvate is required as a cofactor. Is synthesized initially as an inactive proenzyme. Formation of the active enzyme involves a self-maturation process in which the active site pyruvoyl group is generated from an internal serine residue via an autocatalytic post-translational modification. Two non-identical subunits are generated from the proenzyme in this reaction, and the pyruvate is formed at the N-terminus of the alpha chain, which is derived from the carboxyl end of the proenzyme. The post-translation cleavage follows an unusual pathway, termed non-hydrolytic serinolysis, in which the side chain hydroxyl group of the serine supplies its oxygen atom to form the C-terminus of the beta chain, while the remainder of the serine residue undergoes an oxidative deamination to produce ammonia and the pyruvoyl prosthetic group on the alpha chain.

Its subcellular location is the cell membrane. It carries out the reaction a 1,2-diacyl-sn-glycero-3-phospho-L-serine + H(+) = a 1,2-diacyl-sn-glycero-3-phosphoethanolamine + CO2. It functions in the pathway phospholipid metabolism; phosphatidylethanolamine biosynthesis; phosphatidylethanolamine from CDP-diacylglycerol: step 2/2. In terms of biological role, catalyzes the formation of phosphatidylethanolamine (PtdEtn) from phosphatidylserine (PtdSer). The chain is Phosphatidylserine decarboxylase proenzyme from Pelodictyon phaeoclathratiforme (strain DSM 5477 / BU-1).